We begin with the raw amino-acid sequence, 78 residues long: Mitotic-spindle organizing protein 1 (78 aa).

Position 2 is an N-acetylalanine (A2).

This sequence belongs to the MOZART1 family. In terms of assembly, associates with the gamma-tubulin ring complex (gTuRC) consisting of TUBGCP2, TUBGCP3, TUBGCP4, TUBGCP5 and TUBGCP6 and gamma-tubulin TUBG1 or TUBG2; within the complex, interacts with TUBGCP3 and TUBGCP6 to form a luminal bridge with actin that stabilizes the initial structure during complex assembly. Interacts with TUBG1.

It is found in the cytoplasm. It localises to the cytoskeleton. The protein resides in the microtubule organizing center. The protein localises to the centrosome. Its subcellular location is the spindle. Required for the recruitment and the assembly of the gamma-tubulin ring complex (gTuRC) at the centrosome. The gTuRC regulates the minus-end nucleation of alpha-beta tubulin heterodimers that grow into microtubule protafilaments, a critical step in centrosome duplication and spindle formation. The chain is Mitotic-spindle organizing protein 1 (Mzt1) from Mus musculus (Mouse).